The primary structure comprises 402 residues: Cytochrome b561 and DOMON domain-containing protein At4g17280 (402 aa).

The signal sequence occupies residues 1–31; that stretch reads MSNHMSIMKFLNQILCLSLILSISMTTLSFA. Positions 54–171 constitute a DOMON domain; sequence LDSFLHYTYE…GTINTVWQDG (118 aa). Positions 183-379 constitute a Cytochrome b561 domain; it reads TSGNNVRSVS…LEAFTWYVVI (197 aa). A run of 2 helical transmembrane segments spans residues 218-238 and 250-270; these read IHGI…AIIA and AWFY…VAGW. Heme b contacts are provided by H219, H255, and H288. Residues 290–310 traverse the membrane as a helical segment; the sequence is AIGIALFSLATVQVFAMFLRP. H324 contacts heme b. Helical transmembrane passes span 326–346 and 359–379; these read TIGY…LGIL and IIVV…YVVI.

The cofactor is heme b.

The protein resides in the membrane. May act as a catecholamine-responsive trans-membrane electron transporter. The chain is Cytochrome b561 and DOMON domain-containing protein At4g17280 from Arabidopsis thaliana (Mouse-ear cress).